The primary structure comprises 1653 residues: Protein TOPAZ1 (1653 aa).

5 disordered regions span residues 1–88 (MPRA…PGID), 212–238 (GCMH…TDPS), 553–591 (KMKS…KKDR), 855–893 (PNVA…GSMK), and 919–942 (EVTH…SSDL). 2 stretches are compositionally biased toward basic and acidic residues: residues 58-69 (SGREEVESDKSA) and 221-236 (SKSK…DKTD). Polar residues predominate over residues 561-585 (RSASEVVSNTTEDTSLTNMTHNLTG). Composition is skewed to basic and acidic residues over residues 858 to 877 (AEEH…KKEP) and 920 to 942 (VTHE…SSDL).

The protein resides in the cytoplasm. It localises to the cytosol. In terms of biological role, important for normal spermatogenesis and male fertility. Specifically required for progression to the post-meiotic stages of spermatocyte development. Seems to be necessary for normal expression levels of a number of testis-expressed gene transcripts, although its role in this process is unclear. The chain is Protein TOPAZ1 (TOPAZ1) from Bos taurus (Bovine).